Consider the following 627-residue polypeptide: Hemocyanin D chain (627 aa).

His171, His175, His202, His322, His326, and His362 together coordinate Cu cation. Residue Asn445 is glycosylated (N-linked (GlcNAc...) asparagine). Residues Cys531 and Cys579 are joined by a disulfide bond.

The protein belongs to the tyrosinase family. Hemocyanin subfamily. Tarantula hemocyanin is a 24-chain polymer with seven different chains identified. In terms of tissue distribution, hemolymph.

Its subcellular location is the secreted. The protein localises to the extracellular space. Hemocyanins are copper-containing oxygen carriers occurring freely dissolved in the hemolymph of many mollusks and arthropods. This is Hemocyanin D chain (HCD) from Aphonopelma sp. (American tarantula).